The chain runs to 136 residues: MSQLVYFSSSSENTQRFIERLGLPAVRIPLNERERIQVDEPYILIVPSYGGGGTTGAVPRQVIRFLNDEHNRALLRGVIASGNRNFGEAYGRAGDVIARKCGVPWLYRFELMGTQSDIENVRKGVTEFWQRQPQNA.

This sequence belongs to the NrdI family.

In terms of biological role, probably involved in ribonucleotide reductase function. The polypeptide is Protein NrdI (Escherichia coli O7:K1 (strain IAI39 / ExPEC)).